Reading from the N-terminus, the 332-residue chain is MVQVAVMGAGSWGTTVAKVFADAGNEVRLWARRAEVAEDVRDNHRNSAYLGDIELPAALTGTTDPAEALNGAEIVVLGVPSQSLRENLQNWKDLIGPDASLVSLAKGIEHSSGLRMSQLVSEVADVPSERVAVLTGPNLAREVAQGQPAATVVACTDMDRAKLIQAAVAAPYFRPYTNTDVIGCEIAGTCKNVIALAAGIAAGMGFGDNTAATVITRGLAETTRLALEVGADARTLSGLAGMGDLVATCTSTLSRNRRFGEHLGKGETLEQAAASTKGQVAEGVVSSQSVFELAEKVGVETPITEAVVGVCHEGADVQQIMMGLLGRSKKAE.

Residues S11, W12, R32, R33, and K106 each contribute to the NADPH site. K106 and G136 together coordinate sn-glycerol 3-phosphate. Position 140 (A140) interacts with NADPH. The sn-glycerol 3-phosphate site is built by K191, D244, S254, R255, and N256. K191 functions as the Proton acceptor in the catalytic mechanism. R255 contributes to the NADPH binding site. Residues V280 and E282 each coordinate NADPH.

Belongs to the NAD-dependent glycerol-3-phosphate dehydrogenase family.

Its subcellular location is the cytoplasm. It catalyses the reaction sn-glycerol 3-phosphate + NAD(+) = dihydroxyacetone phosphate + NADH + H(+). The catalysed reaction is sn-glycerol 3-phosphate + NADP(+) = dihydroxyacetone phosphate + NADPH + H(+). Its pathway is membrane lipid metabolism; glycerophospholipid metabolism. In terms of biological role, catalyzes the reduction of the glycolytic intermediate dihydroxyacetone phosphate (DHAP) to sn-glycerol 3-phosphate (G3P), the key precursor for phospholipid synthesis. In Corynebacterium jeikeium (strain K411), this protein is Glycerol-3-phosphate dehydrogenase [NAD(P)+].